The sequence spans 35 residues: Leukocyte cysteine proteinase inhibitor 2 (35 aa).

Residues 1–35 (LAGGLTEPRPADTEIQEIANKVKPQLEEKTNKKYD) are disordered. A compositionally biased stretch (basic and acidic residues) spans 24-35 (PQLEEKTNKKYD).

Belongs to the cystatin family.

It is found in the cytoplasm. In terms of biological role, potent inhibitor of cathepsins L and S, and papain. The sequence is that of Leukocyte cysteine proteinase inhibitor 2 from Sus scrofa (Pig).